A 150-amino-acid polypeptide reads, in one-letter code: Lipoprotein signal peptidase (150 aa).

The next 3 helical transmembrane spans lie at 5–25 (LSLV…NWVV), 59–79 (QQWF…WFLW), and 82–102 (MGQN…LGNF). Residues aspartate 113 and aspartate 129 contribute to the active site. Residues 124–144 (IFNIADILLSVGFVVLFIAIL) traverse the membrane as a helical segment.

The protein belongs to the peptidase A8 family.

The protein resides in the cell membrane. It carries out the reaction Release of signal peptides from bacterial membrane prolipoproteins. Hydrolyzes -Xaa-Yaa-Zaa-|-(S,diacylglyceryl)Cys-, in which Xaa is hydrophobic (preferably Leu), and Yaa (Ala or Ser) and Zaa (Gly or Ala) have small, neutral side chains.. It participates in protein modification; lipoprotein biosynthesis (signal peptide cleavage). This protein specifically catalyzes the removal of signal peptides from prolipoproteins. This chain is Lipoprotein signal peptidase, found in Lactococcus lactis subsp. cremoris (strain SK11).